Here is a 341-residue protein sequence, read N- to C-terminus: tRNA N6-adenosine threonylcarbamoyltransferase (341 aa).

Residues His-111 and His-115 each coordinate Fe cation. Substrate contacts are provided by residues 134-138, Asp-167, Gly-180, and Asn-276; that span reads LVSGG. Asp-304 is a Fe cation binding site.

It belongs to the KAE1 / TsaD family. Fe(2+) serves as cofactor.

The protein localises to the cytoplasm. It catalyses the reaction L-threonylcarbamoyladenylate + adenosine(37) in tRNA = N(6)-L-threonylcarbamoyladenosine(37) in tRNA + AMP + H(+). Functionally, required for the formation of a threonylcarbamoyl group on adenosine at position 37 (t(6)A37) in tRNAs that read codons beginning with adenine. Is involved in the transfer of the threonylcarbamoyl moiety of threonylcarbamoyl-AMP (TC-AMP) to the N6 group of A37, together with TsaE and TsaB. TsaD likely plays a direct catalytic role in this reaction. The protein is tRNA N6-adenosine threonylcarbamoyltransferase of Azotobacter vinelandii (strain DJ / ATCC BAA-1303).